Consider the following 229-residue polypeptide: Large ribosomal subunit protein uL1 (229 aa).

It belongs to the universal ribosomal protein uL1 family. Part of the 50S ribosomal subunit.

In terms of biological role, binds directly to 23S rRNA. The L1 stalk is quite mobile in the ribosome, and is involved in E site tRNA release. Functionally, protein L1 is also a translational repressor protein, it controls the translation of the L11 operon by binding to its mRNA. The chain is Large ribosomal subunit protein uL1 from Actinobacillus pleuropneumoniae serotype 3 (strain JL03).